The chain runs to 239 residues: Isoprenyl transferase (239 aa).

The active site involves Asp-16. Asp-16 contacts Mg(2+). Residues 17-20 (GNGR), Trp-21, Arg-29, His-33, and 61-63 (STE) contribute to the substrate site. The active-site Proton acceptor is Asn-64. Substrate is bound by residues Trp-65, Arg-67, Arg-187, and 193-195 (RLS). Residue Glu-206 participates in Mg(2+) binding.

The protein belongs to the UPP synthase family. As to quaternary structure, homodimer. It depends on Mg(2+) as a cofactor.

Catalyzes the condensation of isopentenyl diphosphate (IPP) with allylic pyrophosphates generating different type of terpenoids. The chain is Isoprenyl transferase from Lactobacillus johnsonii (strain CNCM I-12250 / La1 / NCC 533).